Reading from the N-terminus, the 929-residue chain is MESMLNKLKSTVTKVTADVTSAVMGNPVTREFDVGRHIASGGNGLAWKIFNGTKKSTKQEVAVFVFDKKLIDKYQKFEKDQIIDSLKRGVQQLTRLRHPRLLTVQHPLEESRDCLAFCTEPVFASLANVLGNWENLPSPISPDIKDYKLYDVETKYGLLQVSEGLSFLHSSVKMVHGNITPENIILNKSGAWKIMGFDFCVSSTNPSEQEPKFPCKEWDPNLPSLCLPNPEYLAPEYILSVSCETASDMYSLGTVMYAVFNKGKPIFEVNKQDIYKSFSRQLDQLSRLGSSSLTNIPEEVREHVKLLLNVTPTVRPDADQMTKIPFFDDVGAVTLQYFDTLFQRDNLQKSQFFKGLPKVLPKLPKRVIVQRILPCLTSEFVNPDMVPFVLPNVLLIAEECTKEEYVKLILPELGPVFKQQEPIQILLIFLQKMDLLLTKTPPDEIKNSVLPMVYRALEAPSIQIQELCLNIIPTFANLIDYPSMKNALIPRIKNACLQTSSLAVRVNSLVCLGKILEYLDKWFVLDDILPFLQQIPSKEPAVLMGILGIYKCTFTHKKLGITKEQLAGKVLPHLIPLSIENNLNLNQFNSFISVIKEMLNRLESEHKTKLEQLHIMQEQQKSLDIGNQMNVSEEMKVTNIGNQQIDKVFNNIGADLLTGSESENKEDGLQNKHKRASLTLEEKQKLAKEQEQAQKLKSQQPLKPQVHTPVATVKQTKDLTDTLMDNMSSLTSLSVSTPKSSASSTFTSVPSMGIGMMFSTPTDNTKRNLTNGLNANMGFQTSGFNMPVNTNQNFYSSPSTVGVTKMTLGTPPTLPNFNALSVPPAGAKQTQQRPTDMSALNNLFGPQKPKVSMNQLSQQKPNQWLNQFVPPQGSPTMGSSVMGTQMNVIGQSAFGMQGNPFFNPQNFAQPPTTMTNSSSASNDLKDLFG.

The Protein kinase domain maps to 32 to 327 (FDVGRHIASG…ADQMTKIPFF (296 aa)). Residues 443-479 (DEIKNSVLPMVYRALEAPSIQIQELCLNIIPTFANLI) form an HEAT repeat. A coiled-coil region spans residues 661 to 701 (ESENKEDGLQNKHKRASLTLEEKQKLAKEQEQAQKLKSQQP). At serine 677 the chain carries Phosphoserine. Basic and acidic residues predominate over residues 684–694 (QKLAKEQEQAQ). 2 disordered regions span residues 684–709 (QKLA…VHTP) and 906–929 (NFAQ…DLFG). A compositionally biased stretch (low complexity) spans 695-705 (KLKSQQPLKPQ). The interval 699 to 929 (QQPLKPQVHT…ASNDLKDLFG (231 aa)) is necessary for interaction with AP2 complex and clathrin, interaction with clathrin is necessary for its targeting to the TGN and endosomal membranes. The residue at position 708 (threonine 708) is a Phosphothreonine. Positions 912–922 (TTMTNSSSASN) are enriched in polar residues.

Belongs to the protein kinase superfamily. As to quaternary structure, interacts with clathrin and AP2B1; the interaction mediates the association with the AP-2 complex. In terms of processing, could autophosphorylate in presence of poly-L-lysine.

The protein localises to the cytoplasmic vesicle. It is found in the clathrin-coated vesicle. Its subcellular location is the golgi apparatus. It localises to the trans-Golgi network membrane. The protein resides in the endosome membrane. Functionally, component of the AP2-containing clathrin coat that may regulate clathrin-dependent trafficking at plasma membrane, TGN and endosomal system. A possible serine/threonine-protein kinase toward the beta2-subunit of the plasma membrane adapter complex AP2 and other proteins in presence of poly-L-lysine has not been confirmed. By regulating the expression of excitatory receptors at synapses, plays an essential role in neuronal function and signaling and in brain development. This chain is SCY1-like protein 2, found in Homo sapiens (Human).